The chain runs to 1107 residues: Protein translocase subunit SecA (1107 aa).

ATP contacts are provided by residues glutamine 169, 187–191 (GEGKT), and aspartate 688. Over residues 1036–1066 (RHAAEQRTDMSKYRTQKDDIEAQQKAQRDAA) the composition is skewed to basic and acidic residues. Positions 1036–1107 (RHAAEQRTDM…KFKQCHGRNL (72 aa)) are disordered. Zn(2+) is bound by residues cysteine 1091, cysteine 1093, cysteine 1102, and histidine 1103. Positions 1097–1107 (KKFKQCHGRNL) are enriched in basic residues.

The protein belongs to the SecA family. In terms of assembly, monomer and homodimer. Part of the essential Sec protein translocation apparatus which comprises SecA, SecYEG and auxiliary proteins SecDF. Other proteins may also be involved. Zn(2+) is required as a cofactor.

The protein resides in the cell inner membrane. It is found in the cytoplasm. It carries out the reaction ATP + H2O + cellular proteinSide 1 = ADP + phosphate + cellular proteinSide 2.. Its function is as follows. Part of the Sec protein translocase complex. Interacts with the SecYEG preprotein conducting channel. Has a central role in coupling the hydrolysis of ATP to the transfer of proteins into and across the cell membrane, serving as an ATP-driven molecular motor driving the stepwise translocation of polypeptide chains across the membrane. The sequence is that of Protein translocase subunit SecA from Porphyromonas gingivalis (strain ATCC BAA-308 / W83).